The following is a 473-amino-acid chain: Bifunctional protein GlmU (473 aa).

The pyrophosphorylase stretch occupies residues 1-226 (MRAPVAVVIL…AGEASGINDL (226 aa)). UDP-N-acetyl-alpha-D-glucosamine contacts are provided by residues 10 to 13 (LAAG), Lys24, Gln75, 80 to 81 (GT), 102 to 104 (YGD), Gly136, Glu151, Asn166, and Asn224. Asp104 contacts Mg(2+). Asn224 contributes to the Mg(2+) binding site. Residues 227–247 (VQLAEVEEAFQRRWARRLLQG) are linker. Residues 248–473 (GLRLVAPHRF…TPASGGAKEE (226 aa)) form an N-acetyltransferase region. 2 residues coordinate UDP-N-acetyl-alpha-D-glucosamine: Arg330 and Lys348. The active-site Proton acceptor is the His360. Residues Tyr363 and Asn374 each coordinate UDP-N-acetyl-alpha-D-glucosamine. Acetyl-CoA-binding positions include Ala377, 383–384 (NY), Ser402, Ala420, and Arg437. Residues 439 to 473 (RARTIPGWQHPGLTGRRGPPDDNDATPASGGAKEE) form a disordered region.

In the N-terminal section; belongs to the N-acetylglucosamine-1-phosphate uridyltransferase family. It in the C-terminal section; belongs to the transferase hexapeptide repeat family. Homotrimer. Requires Mg(2+) as cofactor.

The protein localises to the cytoplasm. The catalysed reaction is alpha-D-glucosamine 1-phosphate + acetyl-CoA = N-acetyl-alpha-D-glucosamine 1-phosphate + CoA + H(+). It catalyses the reaction N-acetyl-alpha-D-glucosamine 1-phosphate + UTP + H(+) = UDP-N-acetyl-alpha-D-glucosamine + diphosphate. It participates in nucleotide-sugar biosynthesis; UDP-N-acetyl-alpha-D-glucosamine biosynthesis; N-acetyl-alpha-D-glucosamine 1-phosphate from alpha-D-glucosamine 6-phosphate (route II): step 2/2. It functions in the pathway nucleotide-sugar biosynthesis; UDP-N-acetyl-alpha-D-glucosamine biosynthesis; UDP-N-acetyl-alpha-D-glucosamine from N-acetyl-alpha-D-glucosamine 1-phosphate: step 1/1. The protein operates within bacterial outer membrane biogenesis; LPS lipid A biosynthesis. Functionally, catalyzes the last two sequential reactions in the de novo biosynthetic pathway for UDP-N-acetylglucosamine (UDP-GlcNAc). The C-terminal domain catalyzes the transfer of acetyl group from acetyl coenzyme A to glucosamine-1-phosphate (GlcN-1-P) to produce N-acetylglucosamine-1-phosphate (GlcNAc-1-P), which is converted into UDP-GlcNAc by the transfer of uridine 5-monophosphate (from uridine 5-triphosphate), a reaction catalyzed by the N-terminal domain. The polypeptide is Bifunctional protein GlmU (Halorhodospira halophila (strain DSM 244 / SL1) (Ectothiorhodospira halophila (strain DSM 244 / SL1))).